The following is a 142-amino-acid chain: Alpha-lactalbumin (142 aa).

The signal sequence occupies residues 1 to 19; it reads MMSFVSLLLVGILFHATQA. The C-type lysozyme domain maps to 20 to 142; that stretch reads EQLTKCEVFR…KLDQWLCEKL (123 aa). 4 disulfides stabilise this stretch: Cys-25/Cys-139, Cys-47/Cys-130, Cys-80/Cys-96, and Cys-92/Cys-110. A glycan (N-linked (GlcNAc...) asparagine) is linked at Asn-64. Residues Lys-98, Asp-101, Asp-103, Asp-106, and Asp-107 each coordinate Ca(2+).

This sequence belongs to the glycosyl hydrolase 22 family. Lactose synthase (LS) is a heterodimer of a catalytic component, beta1,4-galactosyltransferase (beta4Gal-T1) and a regulatory component, alpha-lactalbumin (LA). As to expression, mammary gland specific. Secreted in milk.

The protein localises to the secreted. Its function is as follows. Regulatory subunit of lactose synthase, changes the substrate specificity of galactosyltransferase in the mammary gland making glucose a good acceptor substrate for this enzyme. This enables LS to synthesize lactose, the major carbohydrate component of milk. In other tissues, galactosyltransferase transfers galactose onto the N-acetylglucosamine of the oligosaccharide chains in glycoproteins. In Bos taurus (Bovine), this protein is Alpha-lactalbumin (LALBA).